The primary structure comprises 942 residues: UvrABC system protein A (942 aa).

Residue 31 to 38 (GLSGSGKS) coordinates ATP. The C4-type zinc-finger motif lies at 253–280 (CSECGYSLPELEPRLFSFNNPAGACPTC). ABC transporter domains are found at residues 310 to 586 (WDRR…EASI) and 606 to 936 (YDAN…RFLT). Residue 639–646 (GVSGSGKS) participates in ATP binding. Residues 739 to 765 (CEACQGDGVIKVEMHFLPDVYVPCDHC) form a C4-type zinc finger.

Belongs to the ABC transporter superfamily. UvrA family. In terms of assembly, forms a heterotetramer with UvrB during the search for lesions.

It is found in the cytoplasm. Functionally, the UvrABC repair system catalyzes the recognition and processing of DNA lesions. UvrA is an ATPase and a DNA-binding protein. A damage recognition complex composed of 2 UvrA and 2 UvrB subunits scans DNA for abnormalities. When the presence of a lesion has been verified by UvrB, the UvrA molecules dissociate. This Haemophilus ducreyi (strain 35000HP / ATCC 700724) protein is UvrABC system protein A.